A 676-amino-acid polypeptide reads, in one-letter code: UvrABC system protein B (676 aa).

Residues Q35–R192 form the Helicase ATP-binding domain. G48–T55 contacts ATP. The Beta-hairpin motif lies at Y101–V124. A Helicase C-terminal domain is found at Q439 to I605. Residues A634 to R669 enclose the UVR domain.

It belongs to the UvrB family. As to quaternary structure, forms a heterotetramer with UvrA during the search for lesions. Interacts with UvrC in an incision complex.

Its subcellular location is the cytoplasm. The UvrABC repair system catalyzes the recognition and processing of DNA lesions. A damage recognition complex composed of 2 UvrA and 2 UvrB subunits scans DNA for abnormalities. Upon binding of the UvrA(2)B(2) complex to a putative damaged site, the DNA wraps around one UvrB monomer. DNA wrap is dependent on ATP binding by UvrB and probably causes local melting of the DNA helix, facilitating insertion of UvrB beta-hairpin between the DNA strands. Then UvrB probes one DNA strand for the presence of a lesion. If a lesion is found the UvrA subunits dissociate and the UvrB-DNA preincision complex is formed. This complex is subsequently bound by UvrC and the second UvrB is released. If no lesion is found, the DNA wraps around the other UvrB subunit that will check the other stand for damage. This Bordetella avium (strain 197N) protein is UvrABC system protein B.